The chain runs to 747 residues: H(+)/Cl(-) exchange transporter 4 (747 aa).

The interval 1–50 (MDFLDEPFPDVGTYEDFHTIDWLREKSRDTDRHRKITSKSKESIWEFIKS) is required for localization in the endoplasmic reticulum. Over 1–54 (MDFLDEPFPDVGTYEDFHTIDWLREKSRDTDRHRKITSKSKESIWEFIKSLLDA) the chain is Cytoplasmic. 2 consecutive transmembrane segments (helical) span residues 55–92 (WSGW…VCLS) and 138–161 (LNYL…VRVF). Positions 167 to 171 (GSGIP) match the Selectivity filter part_1 motif. Position 168 (serine 168) interacts with chloride. The segment at residues 170–177 (IPEIKTIL) is an intramembrane region (helical). A run of 2 helical transmembrane segments spans residues 187 to 205 (GKWT…VSSG) and 211 to 230 (EGPL…SLFS). A Selectivity filter part_2 motif is present at residues 209-213 (GKEGP). Intramembrane regions (helical) lie at residues 242–254 (VLSA…VSVA) and 258–266 (PIGGVLFSL). The next 5 helical transmembrane spans lie at 278–296 (LWRS…RSIN), 320–345 (FPFI…AWCR), 352–372 (LGKY…IIAY), 429–449 (MWQL…TFGM), and 454–473 (GLFI…VGIG). The Selectivity filter part_3 signature appears at 454-458 (GLFIP). Phenylalanine 456 is a binding site for chloride. 2 intramembrane regions (helical) span residues 501 to 515 (GLYA…LGGV) and 519 to 530 (TVSLVVIMFELT). Positions 531 to 534 (GGLE) form an intramembrane region, note=Loop between two helices. The chain crosses the membrane as a helical span at residues 535–553 (YIVPLMAAAVTSKWVADAF). Topologically, residues 554–747 (GKEGIYEAHI…NQDPESIIFN (194 aa)) are cytoplasmic. Residue tyrosine 559 coordinates chloride. Residues 587–653 (MRPRRGEPPL…AIKNARQRQE (67 aa)) enclose the CBS 1 domain. ATP-binding positions include serine 597 and 618 to 620 (YNG). The tract at residues 654–683 (GIVSNSIMYFTEEPPELPANSPHPLKLRRI) is required for localization in the endoplasmic reticulum. A CBS 2 domain is found at 684–742 (LNLSPFTVTDHTPMETVVDIFRKLGLRQCLVTRSGRLLGIITKKDVLRHMAQMANQDPE). An ATP-binding site is contributed by 725-728 (TKKD).

This sequence belongs to the chloride channel (TC 2.A.49) family. ClC-4/CLCN4 subfamily. As to expression, strongly expressed in liver and brain, but also in heart, muscle, kidney and spleen.

The protein resides in the early endosome membrane. The protein localises to the late endosome membrane. It localises to the endoplasmic reticulum membrane. It is found in the lysosome membrane. Its subcellular location is the recycling endosome membrane. Its function is as follows. Strongly outwardly rectifying, electrogenic H(+)/Cl(-)exchanger which mediates the exchange of chloride ions against protons. The CLC channel family contains both chloride channels and proton-coupled anion transporters that exchange chloride or another anion for protons. The presence of conserved gating glutamate residues is typical for family members that function as antiporters. This Rattus norvegicus (Rat) protein is H(+)/Cl(-) exchange transporter 4 (Clcn4).